The primary structure comprises 156 residues: Transcription elongation factor GreA (156 aa).

Residues 12-72 (YKKLEDELST…KEIEHELKYA (61 aa)) are a coiled coil.

It belongs to the GreA/GreB family.

Its function is as follows. Necessary for efficient RNA polymerase transcription elongation past template-encoded arresting sites. The arresting sites in DNA have the property of trapping a certain fraction of elongating RNA polymerases that pass through, resulting in locked ternary complexes. Cleavage of the nascent transcript by cleavage factors such as GreA or GreB allows the resumption of elongation from the new 3'terminus. GreA releases sequences of 2 to 3 nucleotides. This Dehalococcoides mccartyi (strain ATCC BAA-2266 / KCTC 15142 / 195) (Dehalococcoides ethenogenes (strain 195)) protein is Transcription elongation factor GreA.